The primary structure comprises 367 residues: Glycolate oxidase 3 (367 aa).

Residues 1–360 (MELITNVSEY…TRNHVITDSD (360 aa)) form the FMN hydroxy acid dehydrogenase domain. Glyoxylate is bound at residue Tyr25. Residues 78–80 (PSA), Ser107, 128–130 (QLY), and Thr156 contribute to the FMN site. Tyr130 contributes to the glyoxylate binding site. Residue Arg165 participates in glyoxylate binding. Positions 231 and 253 each coordinate FMN. Positions 255 and 258 each coordinate glyoxylate. The Proton acceptor role is filled by His255. Residues 286 to 290 (DGGVR) and 309 to 310 (GR) each bind FMN. The Microbody targeting signal signature appears at 365 to 367 (SRL).

It belongs to the FMN-dependent alpha-hydroxy acid dehydrogenase family. In terms of assembly, homotetramer. Requires FMN as cofactor.

Its subcellular location is the peroxisome. It carries out the reaction glycolate + O2 = glyoxylate + H2O2. It functions in the pathway photosynthesis; photorespiration; glycine from 2-phosphoglycolate: step 2/3. Functionally, catalyzes the oxidation of glycolate to glyoxylate, with a reduction of O2 to H2O2. Is a key enzyme in photorespiration in green plants. This is Glycolate oxidase 3 (GLO3) from Oryza sativa subsp. indica (Rice).